The sequence spans 95 residues: uncharacterized protein (95 aa).

In terms of domain architecture, ABM spans 2 to 92; sequence VREAAMLHIK…YTPFPTVEHF (91 aa).

This is an uncharacterized protein from Bacillus subtilis (strain 168).